The primary structure comprises 161 residues: Allophycocyanin beta chain (161 aa).

Position 71 is an N4-methylasparagine (asparagine 71). Cysteine 81 contacts (2R,3E)-phycocyanobilin.

The protein belongs to the phycobiliprotein family. In terms of assembly, heterodimer of an alpha and a beta chain. Contains one covalently linked phycocyanobilin chromophore.

The protein resides in the cellular thylakoid membrane. Its function is as follows. Light-harvesting photosynthetic bile pigment-protein from the phycobiliprotein complex. Allophycocyanin has a maximum absorption at approximately 650 nanometers. The sequence is that of Allophycocyanin beta chain (apcB) from Arthrospira platensis (Spirulina platensis).